We begin with the raw amino-acid sequence, 450 residues long: Adenylosuccinate lyase (450 aa).

N(6)-(1,2-dicarboxyethyl)-AMP-binding positions include 9 to 10 (RY), 75 to 77 (HHD), and 101 to 102 (TS). His149 acts as the Proton donor/acceptor in catalysis. Residue Gln223 participates in N(6)-(1,2-dicarboxyethyl)-AMP binding. Ser273 functions as the Proton donor/acceptor in the catalytic mechanism. Residues Ser274, 279 to 281 (KRN), and 318 to 322 (SVERV) each bind N(6)-(1,2-dicarboxyethyl)-AMP.

Belongs to the lyase 1 family. Adenylosuccinate lyase subfamily. In terms of assembly, homotetramer. Residues from neighboring subunits contribute catalytic and substrate-binding residues to each active site.

It catalyses the reaction N(6)-(1,2-dicarboxyethyl)-AMP = fumarate + AMP. The catalysed reaction is (2S)-2-[5-amino-1-(5-phospho-beta-D-ribosyl)imidazole-4-carboxamido]succinate = 5-amino-1-(5-phospho-beta-D-ribosyl)imidazole-4-carboxamide + fumarate. The protein operates within purine metabolism; AMP biosynthesis via de novo pathway; AMP from IMP: step 2/2. Its pathway is purine metabolism; IMP biosynthesis via de novo pathway; 5-amino-1-(5-phospho-D-ribosyl)imidazole-4-carboxamide from 5-amino-1-(5-phospho-D-ribosyl)imidazole-4-carboxylate: step 2/2. Its function is as follows. Catalyzes two reactions in de novo purine nucleotide biosynthesis. Catalyzes the breakdown of 5-aminoimidazole- (N-succinylocarboxamide) ribotide (SAICAR or 2-[5-amino-1-(5-phospho-beta-D-ribosyl)imidazole-4-carboxamido]succinate) to 5-aminoimidazole-4-carboxamide ribotide (AICAR or 5-amino-1-(5-phospho-beta-D-ribosyl)imidazole-4-carboxamide) and fumarate, and of adenylosuccinate (ADS or N(6)-(1,2-dicarboxyethyl)-AMP) to adenosine monophosphate (AMP) and fumarate. This is Adenylosuccinate lyase (purB) from Pyrococcus abyssi (strain GE5 / Orsay).